A 291-amino-acid polypeptide reads, in one-letter code: Beta-lactamase CTX-M-4 (291 aa).

Residues 1–28 (MMTQSIRRSMLTVMATLPLLFSSATLHA) form the signal peptide. Serine 73 (acyl-ester intermediate) is an active-site residue. Residue 237–239 (KTG) coordinates substrate.

Belongs to the class-A beta-lactamase family.

It carries out the reaction a beta-lactam + H2O = a substituted beta-amino acid. Functionally, has cefotaxime-hydrolyzing activity. In Salmonella typhimurium, this protein is Beta-lactamase CTX-M-4 (bla).